The primary structure comprises 134 residues: ATP synthase epsilon chain, chloroplastic (134 aa).

The protein belongs to the ATPase epsilon chain family. In terms of assembly, F-type ATPases have 2 components, CF(1) - the catalytic core - and CF(0) - the membrane proton channel. CF(1) has five subunits: alpha(3), beta(3), gamma(1), delta(1), epsilon(1). CF(0) has three main subunits: a, b and c.

The protein resides in the plastid. Its subcellular location is the chloroplast thylakoid membrane. Its function is as follows. Produces ATP from ADP in the presence of a proton gradient across the membrane. This chain is ATP synthase epsilon chain, chloroplastic, found in Nymphaea alba (White water-lily).